Reading from the N-terminus, the 586-residue chain is Arginine--tRNA ligase (586 aa).

Residues 128-138 (ANPTGPLHVGH) carry the 'HIGH' region motif.

This sequence belongs to the class-I aminoacyl-tRNA synthetase family. Monomer.

It localises to the cytoplasm. It carries out the reaction tRNA(Arg) + L-arginine + ATP = L-arginyl-tRNA(Arg) + AMP + diphosphate. The protein is Arginine--tRNA ligase of Legionella pneumophila (strain Corby).